A 295-amino-acid chain; its full sequence is Virginiamycin B lyase (295 aa).

Histidine 228 contributes to the substrate binding site. Glutamate 268 contributes to the Mg(2+) binding site. Residue histidine 270 is the Proton acceptor of the active site. Position 285 (glutamate 285) interacts with Mg(2+).

The protein belongs to the Vgb family. In terms of assembly, monomer. The cofactor is Mg(2+).

In terms of biological role, inactivates the type B streptogramin antibiotics by linearizing the lactone ring at the ester linkage, generating a free phenylglycine carboxylate and converting the threonyl moiety into 2-amino-butenoic acid. In Clostridium beijerinckii (strain ATCC 51743 / NCIMB 8052) (Clostridium acetobutylicum), this protein is Virginiamycin B lyase.